The chain runs to 338 residues: Lipoate-protein ligase A (338 aa).

Residues 29–216 (PATQRVLFLW…AFFEHYSERV (188 aa)) enclose the BPL/LPL catalytic domain. ATP is bound by residues R71, 76-79 (GAVF), and K134. (R)-lipoate is bound at residue K134.

The protein belongs to the LplA family. Monomer.

It is found in the cytoplasm. It carries out the reaction L-lysyl-[lipoyl-carrier protein] + (R)-lipoate + ATP = N(6)-[(R)-lipoyl]-L-lysyl-[lipoyl-carrier protein] + AMP + diphosphate + H(+). It functions in the pathway protein modification; protein lipoylation via exogenous pathway; protein N(6)-(lipoyl)lysine from lipoate: step 1/2. Its pathway is protein modification; protein lipoylation via exogenous pathway; protein N(6)-(lipoyl)lysine from lipoate: step 2/2. In terms of biological role, catalyzes both the ATP-dependent activation of exogenously supplied lipoate to lipoyl-AMP and the transfer of the activated lipoyl onto the lipoyl domains of lipoate-dependent enzymes. The sequence is that of Lipoate-protein ligase A from Enterobacter sp. (strain 638).